The following is a 449-amino-acid chain: Tubulin beta-8 chain (449 aa).

Positions 11, 69, 138, 142, 143, 144, 204, and 226 each coordinate GTP. A Mg(2+)-binding site is contributed by E69. The segment at 428–449 (ATADEEEGYEYEEDEVEVQEEQ) is disordered. The span at 429-449 (TADEEEGYEYEEDEVEVQEEQ) shows a compositional bias: acidic residues.

It belongs to the tubulin family. As to quaternary structure, dimer of alpha and beta chains. A typical microtubule is a hollow water-filled tube with an outer diameter of 25 nm and an inner diameter of 15 nM. Alpha-beta heterodimers associate head-to-tail to form protofilaments running lengthwise along the microtubule wall with the beta-tubulin subunit facing the microtubule plus end conferring a structural polarity. Microtubules usually have 13 protofilaments but different protofilament numbers can be found in some organisms and specialized cells. It depends on Mg(2+) as a cofactor.

It localises to the cytoplasm. The protein localises to the cytoskeleton. Its function is as follows. Tubulin is the major constituent of microtubules, a cylinder consisting of laterally associated linear protofilaments composed of alpha- and beta-tubulin heterodimers. Microtubules grow by the addition of GTP-tubulin dimers to the microtubule end, where a stabilizing cap forms. Below the cap, tubulin dimers are in GDP-bound state, owing to GTPase activity of alpha-tubulin. The chain is Tubulin beta-8 chain (TUBB8) from Arabidopsis thaliana (Mouse-ear cress).